A 614-amino-acid chain; its full sequence is Replication protein A 70 kDa DNA-binding subunit (614 aa).

The segment at Gly-112–Gln-178 is disordered. 2 stretches are compositionally biased toward polar residues: residues Gly-120 to Thr-130 and Pro-158 to Gln-178. The segment at residues Trp-194–Asn-278 is a DNA-binding region (OB). The segment at Cys-478–Cys-500 adopts a C4-type zinc-finger fold.

It belongs to the replication factor A protein 1 family. In terms of assembly, component of the heterotrimeric canonical replication protein A complex (RPA).

The protein localises to the nucleus. It is found in the PML body. In terms of biological role, as part of the heterotrimeric replication protein A complex (RPA/RP-A), binds and stabilizes single-stranded DNA intermediates, that form during DNA replication or upon DNA stress. It prevents their reannealing and in parallel, recruits and activates different proteins and complexes involved in DNA metabolism. Thereby, it plays an essential role both in DNA replication and the cellular response to DNA damage. The protein is Replication protein A 70 kDa DNA-binding subunit (RPA1) of Gallus gallus (Chicken).